A 322-amino-acid polypeptide reads, in one-letter code: F-box protein At2g16300 (322 aa).

The 49-residue stretch at 2 to 50 (ADWSLLPNDLLELIVGHLETSFEIVLFRSVCSSWRSVVPPQDQSRCLSI) folds into the F-box domain.

In Arabidopsis thaliana (Mouse-ear cress), this protein is F-box protein At2g16300.